A 127-amino-acid polypeptide reads, in one-letter code: UPF0102 protein Mmar10_3014 (127 aa).

The protein belongs to the UPF0102 family.

The chain is UPF0102 protein Mmar10_3014 from Maricaulis maris (strain MCS10) (Caulobacter maris).